A 2529-amino-acid chain; its full sequence is Zinc finger FYVE domain-containing protein 26 (2529 aa).

Disordered stretches follow at residues 584–650, 689–709, and 733–810; these read HLPE…PGPH, SSHRTPEETKLPEDQSCSAAR, and VTSN…RFQT. S605 and S609 each carry phosphoserine. The segment covering 689 to 701 has biased composition (basic and acidic residues); the sequence is SSHRTPEETKLPE. Basic residues predominate over residues 755-765; that stretch reads SSLRRGRRTRR. Over residues 778–796 the composition is skewed to low complexity; that stretch reads SLEGTSSELSTSTSEGSLS. S791 is modified (phosphoserine). Polar residues predominate over residues 797 to 810; that stretch reads AVSGQVESDSRFQT. Residues 859-884 adopt a coiled-coil conformation; the sequence is MFVERYQEVIQELARVEHKIENQNSD. The interval 1258–1286 is disordered; sequence GLPLSTLGSPRPSENPSAERKSHSSPKDS. Positions 1263–1273 are enriched in polar residues; the sequence is TLGSPRPSENP. The span at 1274–1283 shows a compositional bias: basic and acidic residues; the sequence is SAERKSHSSP. Residues 1488-1515 adopt a coiled-coil conformation; that stretch reads VSDMAVQEELKSELQRKLMELRVYQKIL. Phosphoserine occurs at positions 1732, 1754, 1770, and 1772. Positions 1762-1799 are disordered; that stretch reads APGSALVRSPSPKERAFPQTQPPVEFVPPETPPARDQW. The segment at 1802–1862 adopts an FYVE-type zinc-finger fold; that stretch reads DETESVCMVC…VCDQCYSYYN (61 aa). Residues C1808, C1811, C1825, C1828, C1833, C1836, C1854, and C1857 each contribute to the Zn(2+) site. Positions 1865-1884 are disordered; the sequence is TPEESPCQSEVPDSAKNESP.

This sequence belongs to the ZFYVE26 family. As to quaternary structure, interacts with AP5Z1, AP5B1, AP5S1 and SPG11. Interacts with TTC19 and KIF13A.

Its subcellular location is the cytoplasm. It is found in the cytoskeleton. The protein resides in the microtubule organizing center. The protein localises to the centrosome. It localises to the midbody. Functionally, phosphatidylinositol 3-phosphate-binding protein required for the abscission step in cytokinesis: recruited to the midbody during cytokinesis and acts as a regulator of abscission. May also be required for efficient homologous recombination DNA double-strand break repair. The protein is Zinc finger FYVE domain-containing protein 26 (Zfyve26) of Mus musculus (Mouse).